We begin with the raw amino-acid sequence, 811 residues long: Glycerol-3-phosphate acyltransferase (811 aa).

The HXXXXD motif motif lies at 309-314 (HRSHMD).

Belongs to the GPAT/DAPAT family.

Its subcellular location is the cell inner membrane. It carries out the reaction sn-glycerol 3-phosphate + an acyl-CoA = a 1-acyl-sn-glycero-3-phosphate + CoA. The protein operates within phospholipid metabolism; CDP-diacylglycerol biosynthesis; CDP-diacylglycerol from sn-glycerol 3-phosphate: step 1/3. This is Glycerol-3-phosphate acyltransferase (plsB) from Vibrio cholerae serotype O1 (strain ATCC 39315 / El Tor Inaba N16961).